The sequence spans 372 residues: Coxsackievirus and adenovirus receptor homolog (372 aa).

The first 22 residues, 1 to 22 (MDMRTSFLCVTYVILLTGSACG), serve as a signal peptide directing secretion. Ig-like C2-type domains are found at residues 23–140 (LQIT…YLLT) and 130–234 (PGIA…VTIT). The Extracellular segment spans residues 23–241 (LQITSTGQTS…TITQPPNTAG (219 aa)). Intrachain disulfides connect C45–C124, C150–C227, and C166–C216. A glycan (N-linked (GlcNAc...) asparagine) is linked at N205. A helical transmembrane segment spans residues 242-262 (IIAGVIICILLLLILLALILF). The Cytoplasmic portion of the chain corresponds to 263–372 (CCCRARHKKK…PAQNKDGSIV (110 aa)). The tract at residues 286-352 (PPPKSRVSTA…PPSRMAGPNL (67 aa)) is disordered. A compositionally biased stretch (polar residues) spans 291-317 (RVSTARSFTSVGSQRSSLGSMSPSNLH). Residues 318–336 (EYSKPQYDKIPSEEYDRPP) are compositionally biased toward basic and acidic residues.

In terms of assembly, monomer. Probably homodimer formed by 2 molecules on adjacent cells.

Its subcellular location is the cell membrane. The protein resides in the basolateral cell membrane. The protein localises to the cell junction. It is found in the tight junction. It localises to the adherens junction. Its function is as follows. May function as a homophilic cell adhesion molecule and be essential for tight junction integrity. May also be involved in transepithelial migration of leukocytes through adhesive interactions with jaml. The interaction between both receptors may also mediate the activation of gamma-delta T-cells, a subpopulation of T-cells residing in epithelia and involved in tissue homeostasis and repair. The polypeptide is Coxsackievirus and adenovirus receptor homolog (cxadr) (Danio rerio (Zebrafish)).